The sequence spans 199 residues: MGKKDEKSQQGEELVKVNKWDGSAVKHALDDAVKTCLLGDRPQLKEQFGLVNTRLALCALAVSVAIMAHAWDFTHPFPESRPVLLFSVLAYFALLGILTLHSSFREKGTFAVALQKDKERERLWEASSDMRKYDDKYLLTLSVRDTKNGKRREQSSNKSCAAFIDQNGIVLDNLVANEVNRLFNALAADKKNASSLSSN.

Residues 1–49 (MGKKDEKSQQGEELVKVNKWDGSAVKHALDDAVKTCLLGDRPQLKEQFG) lie on the Cytoplasmic side of the membrane. A helical transmembrane segment spans residues 50 to 72 (LVNTRLALCALAVSVAIMAHAWD). Residues 73 to 81 (FTHPFPESR) lie on the Lumenal side of the membrane. The helical transmembrane segment at 82–104 (PVLLFSVLAYFALLGILTLHSSF) threads the bilayer. Topologically, residues 105–199 (REKGTFAVAL…KKNASSLSSN (95 aa)) are cytoplasmic.

It belongs to the SPCS2 family. Component of the signal peptidase complex (SPC) composed of a catalytic subunit twr/SEC11 and three accessory subunits Spase12/SPCS1, Spase25/SPCS2 and Spase22-23/SPCS3. The complex induces a local thinning of the ER membrane which is used to measure the length of the signal peptide (SP) h-region of protein substrates. This ensures the selectivity of the complex towards h-regions shorter than 18-20 amino acids.

It localises to the endoplasmic reticulum membrane. Component of the signal peptidase complex (SPC) which catalyzes the cleavage of N-terminal signal sequences from nascent proteins as they are translocated into the lumen of the endoplasmic reticulum. Enhances the enzymatic activity of SPC and facilitates the interactions between different components of the translocation site. In Drosophila melanogaster (Fruit fly), this protein is Signal peptidase complex subunit 2 (Spase25).